A 237-amino-acid polypeptide reads, in one-letter code: Uridylate kinase (237 aa).

Lysine 11–glycine 14 lines the ATP pocket. Residue glycine 52 coordinates UMP. Positions 53 and 57 each coordinate ATP. Residues aspartate 72 and threonine 134–threonine 141 contribute to the UMP site. Asparagine 162, tyrosine 168, and aspartate 171 together coordinate ATP.

Belongs to the UMP kinase family. As to quaternary structure, homohexamer.

It localises to the cytoplasm. The catalysed reaction is UMP + ATP = UDP + ADP. The protein operates within pyrimidine metabolism; CTP biosynthesis via de novo pathway; UDP from UMP (UMPK route): step 1/1. Inhibited by UTP. Its function is as follows. Catalyzes the reversible phosphorylation of UMP to UDP. The polypeptide is Uridylate kinase (Mycoplasma capricolum subsp. capricolum (strain California kid / ATCC 27343 / NCTC 10154)).